The following is a 312-amino-acid chain: MIVEVFFRNFYRNYAKFDIDAVEKREFAFQYFEGGIVRHRAFKTLEELKKFVIEKTPRHIYHSSAYYERPGEEDMERKGWLGADLIFDIDGDHLDTEACRESKLVSIACLNDAKEEANKLIDVLTGELGLKPRRVVFSGNRGFHIHVSEEEVLTLGAKERRELVNYLKAVGFDPSRFVVKKGRKKVVLYEEEVGGNLFRIRQGVEDPRALKIEIDEVVTQDIHRLIRVPGSINGKTGLLALPLSQQDLEKDVEQIVERAIVFKKGNLKLRFNKTFEGAVLFEKINAREGDVKVLPAYLAIYLELQEIGKIYD.

Residues Asp-88, Asp-90, and Asp-215 contribute to the active site.

Belongs to the eukaryotic-type primase small subunit family. As to quaternary structure, heterodimer of a small subunit (PriS) and a large subunit (PriL). It depends on Mg(2+) as a cofactor. Requires Mn(2+) as cofactor.

Functionally, catalytic subunit of DNA primase, an RNA polymerase that catalyzes the synthesis of short RNA molecules used as primers for DNA polymerase during DNA replication. The small subunit contains the primase catalytic core and has DNA synthesis activity on its own. Binding to the large subunit stabilizes and modulates the activity, increasing the rate of DNA synthesis while decreasing the length of the DNA fragments, and conferring RNA synthesis capability. The DNA polymerase activity may enable DNA primase to also catalyze primer extension after primer synthesis. May also play a role in DNA repair. The protein is DNA primase small subunit PriS of Pyrobaculum islandicum (strain DSM 4184 / JCM 9189 / GEO3).